A 344-amino-acid polypeptide reads, in one-letter code: Methionine import ATP-binding protein MetN 1 (344 aa).

The region spanning 2 to 241 (IEIRNLSQRF…PHHEVTRALI (240 aa)) is the ABC transporter domain. An ATP-binding site is contributed by 38–45 (GRSGAGKS).

It belongs to the ABC transporter superfamily. Methionine importer (TC 3.A.1.24) family. The complex is composed of two ATP-binding proteins (MetN), two transmembrane proteins (MetI) and a solute-binding protein (MetQ).

Its subcellular location is the cell inner membrane. It catalyses the reaction L-methionine(out) + ATP + H2O = L-methionine(in) + ADP + phosphate + H(+). The catalysed reaction is D-methionine(out) + ATP + H2O = D-methionine(in) + ADP + phosphate + H(+). Part of the ABC transporter complex MetNIQ involved in methionine import. Responsible for energy coupling to the transport system. This is Methionine import ATP-binding protein MetN 1 from Burkholderia mallei (strain ATCC 23344).